The chain runs to 342 residues: 3-isopropylmalate dehydrogenase (342 aa).

Positions 92, 102, 126, and 216 each coordinate substrate. Aspartate 216, aspartate 240, and aspartate 244 together coordinate Mg(2+). 276–288 lines the NAD(+) pocket; sequence GSAPDIAGKGIAD.

This sequence belongs to the isocitrate and isopropylmalate dehydrogenases family. LeuB type 2 subfamily. In terms of assembly, homodimer. The cofactor is Mg(2+). Requires Mn(2+) as cofactor.

It is found in the cytoplasm. It carries out the reaction (2R,3S)-3-isopropylmalate + NAD(+) = 4-methyl-2-oxopentanoate + CO2 + NADH. It participates in amino-acid biosynthesis; L-leucine biosynthesis; L-leucine from 3-methyl-2-oxobutanoate: step 3/4. Its function is as follows. Catalyzes the oxidation of 3-carboxy-2-hydroxy-4-methylpentanoate (3-isopropylmalate) to 3-carboxy-4-methyl-2-oxopentanoate. The product decarboxylates to 4-methyl-2 oxopentanoate. The sequence is that of 3-isopropylmalate dehydrogenase from Corynebacterium kroppenstedtii (strain DSM 44385 / JCM 11950 / CIP 105744 / CCUG 35717).